Reading from the N-terminus, the 275-residue chain is Dermonecrotic toxin SpeSicTox-betaIIA1 (275 aa).

Histidine 5 is an active-site residue. Mg(2+) contacts are provided by glutamate 25 and aspartate 27. Histidine 41 (nucleophile) is an active-site residue. Disulfide bonds link cysteine 45–cysteine 51 and cysteine 47–cysteine 190. Aspartate 85 contributes to the Mg(2+) binding site.

Belongs to the arthropod phospholipase D family. Class II subfamily. It depends on Mg(2+) as a cofactor. In terms of tissue distribution, expressed by the venom gland.

It is found in the secreted. The catalysed reaction is an N-(acyl)-sphingosylphosphocholine = an N-(acyl)-sphingosyl-1,3-cyclic phosphate + choline. The enzyme catalyses an N-(acyl)-sphingosylphosphoethanolamine = an N-(acyl)-sphingosyl-1,3-cyclic phosphate + ethanolamine. It catalyses the reaction a 1-acyl-sn-glycero-3-phosphocholine = a 1-acyl-sn-glycero-2,3-cyclic phosphate + choline. It carries out the reaction a 1-acyl-sn-glycero-3-phosphoethanolamine = a 1-acyl-sn-glycero-2,3-cyclic phosphate + ethanolamine. Functionally, dermonecrotic toxins cleave the phosphodiester linkage between the phosphate and headgroup of certain phospholipids (sphingolipid and lysolipid substrates), forming an alcohol (often choline) and a cyclic phosphate. This toxin acts on sphingomyelin (SM). It may also act on ceramide phosphoethanolamine (CPE), lysophosphatidylcholine (LPC) and lysophosphatidylethanolamine (LPE), but not on lysophosphatidylserine (LPS), and lysophosphatidylglycerol (LPG). It acts by transphosphatidylation, releasing exclusively cyclic phosphate products as second products. Induces dermonecrosis, hemolysis, increased vascular permeability, edema, inflammatory response, and platelet aggregation. This chain is Dermonecrotic toxin SpeSicTox-betaIIA1, found in Sicarius peruensis (Six-eyed sand spider).